A 183-amino-acid polypeptide reads, in one-letter code: MNLEELKPSKLITFLYHPDELLRFKAAEVLGRKVKGEGARNFILRLFWHLSDESGAYCIGAPLGIAEIGRNNPEVFEGFKNKYVSLLDDWEVERKYVAYGIGRAAEIVRDAYPNPVEKLREKVEEIGDASFIAYAIFALKVLGDDVSDMIARFRKSEEIVEFYDGSEMVRTKLSDLLVEVAED.

This is an uncharacterized protein from Archaeoglobus fulgidus (strain ATCC 49558 / DSM 4304 / JCM 9628 / NBRC 100126 / VC-16).